The following is a 64-amino-acid chain: Prokaryotic ubiquitin-like protein UBact (64 aa).

A disordered region spans residues 1–64 (MFNGEEVILF…SERYRQRTGE (64 aa)). Positions 22-64 (REIHKDAPAPKRPETKKTGDRLMDRMKKVDPNQSERYRQRTGE) are enriched in basic and acidic residues. Glutamate 64 participates in a covalent cross-link: Isoglutamyl lysine isopeptide (Glu-Lys) (interchain with K-? in acceptor proteins).

It belongs to the ubiquitin-like protein UBact family.

Its function is as follows. May function as a protein modifier covalently attached to lysine residues of substrate proteins. This may serve to target the modified proteins for degradation by proteasomes. This Leptospirillum ferriphilum (strain ML-04) protein is Prokaryotic ubiquitin-like protein UBact.